A 298-amino-acid chain; its full sequence is Ribosomal RNA small subunit methyltransferase A (298 aa).

Asn-35, Leu-37, Gly-62, Glu-83, Asp-108, and Asn-133 together coordinate S-adenosyl-L-methionine.

The protein belongs to the class I-like SAM-binding methyltransferase superfamily. rRNA adenine N(6)-methyltransferase family. RsmA subfamily.

Its subcellular location is the cytoplasm. It catalyses the reaction adenosine(1518)/adenosine(1519) in 16S rRNA + 4 S-adenosyl-L-methionine = N(6)-dimethyladenosine(1518)/N(6)-dimethyladenosine(1519) in 16S rRNA + 4 S-adenosyl-L-homocysteine + 4 H(+). In terms of biological role, specifically dimethylates two adjacent adenosines (A1518 and A1519) in the loop of a conserved hairpin near the 3'-end of 16S rRNA in the 30S particle. May play a critical role in biogenesis of 30S subunits. The polypeptide is Ribosomal RNA small subunit methyltransferase A (Streptococcus pyogenes serotype M12 (strain MGAS9429)).